Reading from the N-terminus, the 396-residue chain is Chalcone synthase (396 aa).

C169 is an active-site residue.

Belongs to the thiolase-like superfamily. Chalcone/stilbene synthases family.

It carries out the reaction (E)-4-coumaroyl-CoA + 3 malonyl-CoA + 3 H(+) = 2',4,4',6'-tetrahydroxychalcone + 3 CO2 + 4 CoA. It participates in secondary metabolite biosynthesis; flavonoid biosynthesis. In terms of biological role, the primary product of this enzyme is 4,2',4',6'-tetrahydroxychalcone (also termed naringenin-chalcone or chalcone) which can under specific conditions spontaneously isomerize into naringenin. This is Chalcone synthase (CHS) from Pinus sylvestris (Scotch pine).